A 400-amino-acid chain; its full sequence is Dual specificity mitogen-activated protein kinase kinase 2 (400 aa).

Met1 carries the N-acetylmethionine modification. Ser23 bears the Phosphoserine mark. One can recognise a Protein kinase domain in the interval 72–369 (FERISELGAG…LKMLMSHTFI (298 aa)). Residues 78 to 86 (LGAGNGGVV) and Lys101 contribute to the ATP site. The Proton acceptor role is filled by Asp194. Ser222 carries the phosphoserine; by RAF modification. Phosphoserine occurs at positions 226, 293, 295, and 306. The interval 288–309 (EGEPHSISPRPRPPGRPISGHG) is disordered. Residues Thr394 and Thr396 each carry the phosphothreonine modification.

Belongs to the protein kinase superfamily. STE Ser/Thr protein kinase family. MAP kinase kinase subfamily. As to quaternary structure, interacts with MORG1. Interacts with SGK1. Interacts with KSR1. Interacts with KSR1 and BRAF; the interaction with KSR1 mediates KSR1-BRAF dimerization. Interacts with GLS. It depends on Mg(2+) as a cofactor. MAPKK is itself dependent on Ser/Thr phosphorylation for activity catalyzed by MAP kinase kinase kinases (RAF or MEKK1).

It is found in the cytoplasm. The protein localises to the membrane. The catalysed reaction is L-seryl-[protein] + ATP = O-phospho-L-seryl-[protein] + ADP + H(+). It catalyses the reaction L-threonyl-[protein] + ATP = O-phospho-L-threonyl-[protein] + ADP + H(+). It carries out the reaction L-tyrosyl-[protein] + ATP = O-phospho-L-tyrosyl-[protein] + ADP + H(+). Its function is as follows. Catalyzes the concomitant phosphorylation of a threonine and a tyrosine residue in a Thr-Glu-Tyr sequence located in MAP kinases. Activates the ERK1 and ERK2 MAP kinases. Activates BRAF in a KSR1 or KSR2-dependent manner; by binding to KSR1 or KSR2 releases the inhibitory intramolecular interaction between KSR1 or KSR2 protein kinase and N-terminal domains which promotes KSR1 or KSR2-BRAF dimerization and BRAF activation. In Canis lupus familiaris (Dog), this protein is Dual specificity mitogen-activated protein kinase kinase 2 (MAP2K2).